The sequence spans 123 residues: Small ribosomal subunit protein uS12 (123 aa).

The residue at position 89 (D89) is a 3-methylthioaspartic acid. A disordered region spans residues 104 to 123 (TQGVKDRRQRRSKYGAKRPK). Residues 110 to 123 (RRQRRSKYGAKRPK) are compositionally biased toward basic residues.

Belongs to the universal ribosomal protein uS12 family. In terms of assembly, part of the 30S ribosomal subunit. Contacts proteins S8 and S17. May interact with IF1 in the 30S initiation complex.

Its function is as follows. With S4 and S5 plays an important role in translational accuracy. Interacts with and stabilizes bases of the 16S rRNA that are involved in tRNA selection in the A site and with the mRNA backbone. Located at the interface of the 30S and 50S subunits, it traverses the body of the 30S subunit contacting proteins on the other side and probably holding the rRNA structure together. The combined cluster of proteins S8, S12 and S17 appears to hold together the shoulder and platform of the 30S subunit. The sequence is that of Small ribosomal subunit protein uS12 from Rhodospirillum rubrum (strain ATCC 11170 / ATH 1.1.1 / DSM 467 / LMG 4362 / NCIMB 8255 / S1).